Reading from the N-terminus, the 165-residue chain is Cytochrome c-550-like protein (165 aa).

The N-terminal stretch at 1–30 (MLNKSLLIRFVLTILIIVQVIIFDTQPVQA) is a signal peptide. The heme c site is built by Cys75, Cys78, His79, and Cys129.

The protein belongs to the cytochrome c family. PsbV subfamily. The cofactor is heme c.

Its subcellular location is the cellular thylakoid membrane. Its function is as follows. Possible low-potential cytochrome c. In Trichodesmium erythraeum (strain IMS101), this protein is Cytochrome c-550-like protein (psbV2).